Here is a 674-residue protein sequence, read N- to C-terminus: CLK4-associating serine/arginine rich protein (674 aa).

Residue S101 is modified to Phosphoserine. Disordered stretches follow at residues 171-232 and 258-674; these read TVAE…GMAD and EKAM…HYRH. A compositionally biased stretch (acidic residues) spans 182 to 214; that stretch reads PEEEESAAEEESNSDEDEVIPDIDVEVDVDELN. Basic residues predominate over residues 265–283; the sequence is RRSRRQRREFREKRLRGRK. A phosphoserine mark is found at S285 and S294. The span at 290 to 313 shows a compositional bias: basic and acidic residues; the sequence is ARRDSPTYDPYKRSPSESSSESRS. A Phosphothreonine modification is found at T327. S331 and S335 each carry phosphoserine. Residues 356-365 are compositionally biased toward pro residues; that stretch reads PPAPPQPGGP. Low complexity predominate over residues 378–399; that stretch reads SSSSSSSSASRTSSSRSSSRSS. Basic residues-rich tracts occupy residues 411–443 and 481–492; these read SGRH…RRHS and RGGRGLRHHSSS. Composition is skewed to low complexity over residues 493 to 506 and 514 to 532; these read RSRS…SRSR and HSPS…SQSP. S547 carries the phosphoserine modification. Position 573 is a phosphothreonine (T573). Residues 585–647 adopt a coiled-coil conformation; sequence ALNRQFKADK…ERQYSRQSRS (63 aa). Composition is skewed to basic and acidic residues over residues 590–617 and 625–641; these read FKAD…ELRA and KERE…ERQY. Over residues 642 to 651 the composition is skewed to low complexity; that stretch reads SRQSRSPSPR. Over residues 659-674 the composition is skewed to basic residues; it reads SRRRSRSRSRSPHYRH.

It belongs to the splicing factor SR family. In terms of assembly, probably interacts with CLK4. In terms of processing, phosphorylated in vitro by CLK4.

Its subcellular location is the nucleus. Its function is as follows. Probably functions as an alternative splicing regulator. May regulate the mRNA splicing of genes such as CLK1. May act by regulating members of the CLK kinase family. The chain is CLK4-associating serine/arginine rich protein (CLASRP) from Homo sapiens (Human).